Reading from the N-terminus, the 219-residue chain is Casein kinase II subunit beta' (219 aa).

Position 2 is a phosphothreonine; by autocatalysis (Thr-2).

This sequence belongs to the casein kinase 2 subunit beta family. Tetramer of two alpha and two beta' subunits. In terms of processing, phosphorylated by alpha subunit.

Participates in Wnt signaling. Plays a complex role in regulating the basal catalytic activity of the alpha subunit. This chain is Casein kinase II subunit beta' (CkIIbeta2), found in Drosophila melanogaster (Fruit fly).